The chain runs to 671 residues: DNA ligase (671 aa).

Residues 34 to 38 (DSEYD), 83 to 84 (SL), and Glu113 contribute to the NAD(+) site. The active-site N6-AMP-lysine intermediate is the Lys115. Residues Arg136, Glu170, Lys286, and Lys310 each coordinate NAD(+). Zn(2+)-binding residues include Cys404, Cys407, Cys422, and Cys427. The 82-residue stretch at 590-671 (EEAGVFAGKT…FTQAVEQSEQ (82 aa)) folds into the BRCT domain.

It belongs to the NAD-dependent DNA ligase family. LigA subfamily. It depends on Mg(2+) as a cofactor. Mn(2+) serves as cofactor.

It carries out the reaction NAD(+) + (deoxyribonucleotide)n-3'-hydroxyl + 5'-phospho-(deoxyribonucleotide)m = (deoxyribonucleotide)n+m + AMP + beta-nicotinamide D-nucleotide.. DNA ligase that catalyzes the formation of phosphodiester linkages between 5'-phosphoryl and 3'-hydroxyl groups in double-stranded DNA using NAD as a coenzyme and as the energy source for the reaction. It is essential for DNA replication and repair of damaged DNA. In Shouchella clausii (strain KSM-K16) (Alkalihalobacillus clausii), this protein is DNA ligase.